The chain runs to 147 residues: MIIMVIIFLVLLFWENEVNDEAVMSTLEHLHVDYPQNDVPVPARYCNHMIIQRVIREPDHTCKKEHVFIHERPRKINGICISPKKVACQNLSAIFCFQSETKFKMTVCQLIEGTRYPACRYHYSPTEGFVLVTCDDLRPDSFLGYVK.

An N-terminal signal peptide occupies residues 1–20 (MIIMVIIFLVLLFWENEVND).

Belongs to the pancreatic ribonuclease family.

Its subcellular location is the secreted. Its function is as follows. Does not exhibit any ribonuclease activity. The protein is Probable inactive ribonuclease-like protein 12 (RNASE12) of Homo sapiens (Human).